Here is a 422-residue protein sequence, read N- to C-terminus: 3-phosphoshikimate 1-carboxyvinyltransferase (422 aa).

3 residues coordinate 3-phosphoshikimate: Lys20, Ser21, and Arg25. A phosphoenolpyruvate-binding site is contributed by Lys20. Phosphoenolpyruvate is bound by residues Gly91 and Arg119. 3-phosphoshikimate is bound by residues Thr163, Ser164, Gln165, Asp305, Gln328, and Lys332. Gln165 is a binding site for phosphoenolpyruvate. Asp305 acts as the Proton acceptor in catalysis. 2 residues coordinate phosphoenolpyruvate: Arg336 and Arg377.

The protein belongs to the EPSP synthase family. Monomer.

The protein resides in the cytoplasm. It carries out the reaction 3-phosphoshikimate + phosphoenolpyruvate = 5-O-(1-carboxyvinyl)-3-phosphoshikimate + phosphate. The protein operates within metabolic intermediate biosynthesis; chorismate biosynthesis; chorismate from D-erythrose 4-phosphate and phosphoenolpyruvate: step 6/7. Functionally, catalyzes the transfer of the enolpyruvyl moiety of phosphoenolpyruvate (PEP) to the 5-hydroxyl of shikimate-3-phosphate (S3P) to produce enolpyruvyl shikimate-3-phosphate and inorganic phosphate. The sequence is that of 3-phosphoshikimate 1-carboxyvinyltransferase from Ruminiclostridium cellulolyticum (strain ATCC 35319 / DSM 5812 / JCM 6584 / H10) (Clostridium cellulolyticum).